Consider the following 32-residue polypeptide: Jingzhaotoxin F4-32.60 (32 aa).

3 cysteine pairs are disulfide-bonded: Cys2–Cys17, Cys9–Cys22, and Cys16–Cys29. The residue at position 31 (Asp31) is an Aspartic acid 1-amide.

The protein belongs to the neurotoxin 10 (Hwtx-1) family. 30 (Jztx-14) subfamily. In terms of processing, amidated as well as non-amidated forms are found in the venom. In terms of tissue distribution, expressed by the venom gland.

Its subcellular location is the secreted. Probable ion channel inhibitor. This is Jingzhaotoxin F4-32.60 from Chilobrachys guangxiensis (Chinese earth tiger tarantula).